A 246-amino-acid chain; its full sequence is Large ribosomal subunit protein uL3 (246 aa).

Gln151 carries the post-translational modification N5-methylglutamine.

The protein belongs to the universal ribosomal protein uL3 family. Part of the 50S ribosomal subunit. Forms a cluster with proteins L14 and L19. Post-translationally, methylated by PrmB.

One of the primary rRNA binding proteins, it binds directly near the 3'-end of the 23S rRNA, where it nucleates assembly of the 50S subunit. The chain is Large ribosomal subunit protein uL3 from Bartonella henselae (strain ATCC 49882 / DSM 28221 / CCUG 30454 / Houston 1) (Rochalimaea henselae).